Reading from the N-terminus, the 226-residue chain is UPF0758 protein SAK_1186 (226 aa).

In terms of domain architecture, MPN spans 103-225 (QILSSEQLAR…YYSFREEADI (123 aa)). Residues His-174, His-176, and Asp-187 each coordinate Zn(2+). The short motif at 174–187 (HNHPSGSPKPSESD) is the JAMM motif element.

The protein belongs to the UPF0758 family.

The sequence is that of UPF0758 protein SAK_1186 from Streptococcus agalactiae serotype Ia (strain ATCC 27591 / A909 / CDC SS700).